The following is an 874-amino-acid chain: Collagen alpha-2(I) chain (874 aa).

A disordered region spans residues Ser-1–Ala-874. A 4-hydroxyproline mark is found at Pro-10 and Pro-13. Lys-16 bears the Allysine mark. The segment covering Leu-27 to Pro-66 has biased composition (low complexity). 4-hydroxyproline occurs at positions 34 and 40. Lys-93 bears the 5-hydroxylysine; alternate mark. An O-linked (Gal...) hydroxylysine; alternate glycan is attached at Lys-93. 3 stretches are compositionally biased toward low complexity: residues Ala-110 to Pro-143, Pro-188 to Pro-209, and Pro-218 to Lys-236. Residues Gly-237–Gly-246 are compositionally biased toward gly residues. Low complexity predominate over residues Ser-247–Ser-257. Pro-317 and Pro-320 each carry 4-hydroxyproline. Composition is skewed to low complexity over residues Leu-346–Ala-365, Pro-434–Pro-451, and Glu-463–Ala-473. Over residues Gly-474–Gly-483 the composition is skewed to gly residues. Low complexity-rich tracts occupy residues Arg-491 to Ser-538 and Val-545 to Ala-565. Positions Lys-566–Lys-575 are enriched in basic and acidic residues. Residues Pro-583 to Ala-593 are compositionally biased toward low complexity. Residues Gly-603 to Gly-612 are compositionally biased toward gly residues. Residues Thr-614–Thr-623 show a composition bias toward low complexity. Over residues Gly-648–Gly-662 the composition is skewed to gly residues. Low complexity-rich tracts occupy residues Phe-663–Pro-697 and Leu-705–Pro-724. Residues Gly-725–Gly-744 are compositionally biased toward gly residues. 2 stretches are compositionally biased toward low complexity: residues Ala-745–Ala-755 and Glu-763–Pro-778.

It belongs to the fibrillar collagen family. In terms of assembly, trimers of one alpha 2(I) and two alpha 1(I) chains. Interacts (via C-terminus) with TMEM131 (via PapD-L domain); the interaction is direct and is involved in assembly and TRAPPIII ER-to-Golgi transport complex-dependent secretion of collagen. Post-translationally, prolines at the third position of the tripeptide repeating unit (G-X-Y) are hydroxylated in some or all of the chains. Expressed in bones.

Its subcellular location is the secreted. The protein localises to the extracellular space. It is found in the extracellular matrix. In terms of biological role, type I collagen is a member of group I collagen (fibrillar forming collagen). The polypeptide is Collagen alpha-2(I) chain (Megalonyx jeffersonii (Jefferson's ground sloth)).